Reading from the N-terminus, the 494-residue chain is SNF1-related protein kinase catalytic subunit alpha KIN12 (494 aa).

One can recognise a Protein kinase domain in the interval 19-270; the sequence is YRIGKTLGHG…ITEIRQHPWF (252 aa). Residues 25–33 and Lys-48 each bind ATP; that span reads LGHGSFAKV. The active-site Proton acceptor is Asp-142. Phosphothreonine is present on Thr-175. Residues 289–386 are auto-inhibitory domain (AID); sequence AKKIEEEIIQ…GLKSNVKDDK (98 aa). One can recognise a UBA domain in the interval 291–331; that stretch reads KIEEEIIQNVVNIGFDRNHVVDSLANRIQNEATVAYHLILD. Positions 293–494 are regulatory domain (RD); sequence EEEIIQNVVN…VAFLRELGVL (202 aa). Residues 387-494 form a PPI region; it reads TWTLGLQSQG…VAFLRELGVL (108 aa). The 49-residue stretch at 445 to 493 folds into the KA1 domain; that stretch reads AIILPTVIKFEIQLYKVREGKYLLDILRIDGPQFIFFDLCVAFLRELGV.

This sequence belongs to the protein kinase superfamily. CAMK Ser/Thr protein kinase family. SNF1 subfamily. In terms of assembly, subunit of a probable heterotrimeric complex consisting of an alpha catalytic subunit, and a beta (KINB) and a gamma (KING or SNF4) non-catalytic regulatory subunits. In terms of processing, autophosphorylated. Expressed at very low levels.

The catalysed reaction is L-seryl-[protein] + ATP = O-phospho-L-seryl-[protein] + ADP + H(+). It catalyses the reaction L-threonyl-[protein] + ATP = O-phospho-L-threonyl-[protein] + ADP + H(+). Its activity is regulated as follows. Activated by phosphorylation at Thr-175. Its function is as follows. Catalytic subunit of the probable trimeric SNF1-related protein kinase (SnRK) complex, a central regulator of cellular energy homeostasis, which, in response to seemingly unrelated darkness, sugar and stress conditions, activates energy-producing pathways and inhibits energy-consuming processes. May also be involved in the regulation of fatty acid synthesis by phosphorylation of acetyl-CoA carboxylase and in assimilation of nitrogen by phosphorylating nitrate reductase. The protein is SNF1-related protein kinase catalytic subunit alpha KIN12 of Arabidopsis thaliana (Mouse-ear cress).